The following is a 169-amino-acid chain: Ecotin (169 aa).

An N-terminal signal peptide occupies residues 1-21 (MKKCSIILASVLLATSINAIA). C76 and C113 are disulfide-bonded.

This sequence belongs to the protease inhibitor I11 (ecotin) family. As to quaternary structure, homodimer.

The protein localises to the periplasm. Its function is as follows. General inhibitor of pancreatic serine proteases: inhibits chymotrypsin, trypsin, elastases, factor X, kallikrein as well as a variety of other proteases. The protein is Ecotin of Yersinia pseudotuberculosis serotype O:1b (strain IP 31758).